We begin with the raw amino-acid sequence, 477 residues long: Glycogen synthase (477 aa).

Lys-15 is a binding site for ADP-alpha-D-glucose.

Belongs to the glycosyltransferase 1 family. Bacterial/plant glycogen synthase subfamily.

It carries out the reaction [(1-&gt;4)-alpha-D-glucosyl](n) + ADP-alpha-D-glucose = [(1-&gt;4)-alpha-D-glucosyl](n+1) + ADP + H(+). It participates in glycan biosynthesis; glycogen biosynthesis. Its function is as follows. Synthesizes alpha-1,4-glucan chains using ADP-glucose. The protein is Glycogen synthase (glgA) of Salmonella typhimurium (strain LT2 / SGSC1412 / ATCC 700720).